A 494-amino-acid chain; its full sequence is MELLGLPTLALLVLVMSLSLLSVWTKMRTGGRLPPGPTPLPIIGNILQLDLKDIPASLSKLAKEYGPVYTLYFGSWPTVVLHGYDVVKEALLNQGDEFLGRGPLPIIEDSQKGHGIVFSEGERWKLLRRFSLMTLKNFGMGKRSLEERVQEEARCLVEELHKTEAQPFDPTFILACAPCNVICSILFNERFPYNDKTFLNLMDLLNKNFYQLNSIWIQMYNLWPTIMKYIPGKHREFSKRLGGVKNFILEKVKEHQESLDPANPRDYIDCFLSKIEEEKHNLKSDFNLENLAICGSNLFTAGTETTSTTLRFGLLLLVKHPEVQAKVHEELDRVIGRHQPPSMKDKMKLPYTDAVLHEIQRYITLLPSSLPHAVVQDTKFRHYVIPKGTAVFPFLSSILLDQKEFPNPEKFDPGHFLDKNGCFKKTDYFVPFSLGKRSCVGEGLARMELFLFFTTILQKFSLKALVEPKDLDIKPVTTGLFNLPPPYKLRLVPR.

The first 25 residues, 1–25, serve as a signal peptide directing secretion; it reads MELLGLPTLALLVLVMSLSLLSVWT. Serine 131 carries the post-translational modification Phosphoserine. N6-acetyllysine occurs at positions 253 and 379. Position 439 (cysteine 439) interacts with heme.

It belongs to the cytochrome P450 family. The cofactor is heme. In terms of tissue distribution, highly expressed in liver, particularly in hepatocytes and bile duct epithelial cells (at protein level). Expressed in nephron segments. Prominent expression is detected in proximal tubules at the corticomedullary junction (at protein level). Also expressed in renal cortical collecting duct. Lower expression levels are detected in adrenal glands.

It is found in the endoplasmic reticulum membrane. It localises to the microsome membrane. It carries out the reaction (5Z,8Z,11Z,14Z)-eicosatetraenoate + reduced [NADPH--hemoprotein reductase] + O2 = (8R,9S)-epoxy-(5Z,11Z,14Z)-eicosatrienoate + oxidized [NADPH--hemoprotein reductase] + H2O + H(+). It catalyses the reaction (5Z,8Z,11Z,14Z)-eicosatetraenoate + reduced [NADPH--hemoprotein reductase] + O2 = (11R,12S)-epoxy-(5Z,8Z,14Z)-eicosatrienoate + oxidized [NADPH--hemoprotein reductase] + H2O + H(+). The catalysed reaction is (5Z,8Z,11Z,14Z)-eicosatetraenoate + reduced [NADPH--hemoprotein reductase] + O2 = 14,15-epoxy-(5Z,8Z,11Z)-eicosatrienoate + oxidized [NADPH--hemoprotein reductase] + H2O + H(+). The enzyme catalyses (5Z,8Z,11Z,14Z,17Z)-eicosapentaenoate + reduced [NADPH--hemoprotein reductase] + O2 = 8,9-epoxy-(5Z,11Z,14Z,17Z)-eicosatetraenoate + oxidized [NADPH--hemoprotein reductase] + H2O + H(+). It carries out the reaction (5Z,8Z,11Z,14Z,17Z)-eicosapentaenoate + reduced [NADPH--hemoprotein reductase] + O2 = 11,12-epoxy-(5Z,8Z,14Z,17Z)-eicosatetraenoate + oxidized [NADPH--hemoprotein reductase] + H2O + H(+). It catalyses the reaction (5Z,8Z,11Z,14Z,17Z)-eicosapentaenoate + reduced [NADPH--hemoprotein reductase] + O2 = 14,15-epoxy-(5Z,8Z,11Z,17Z)-eicosatetraenoate + oxidized [NADPH--hemoprotein reductase] + H2O + H(+). The catalysed reaction is (5Z,8Z,11Z,14Z,17Z)-eicosapentaenoate + reduced [NADPH--hemoprotein reductase] + O2 = (17R,18S)-epoxy-(5Z,8Z,11Z,14Z)-eicosatetraenoate + oxidized [NADPH--hemoprotein reductase] + H2O + H(+). The enzyme catalyses (5Z,8Z,11Z,14Z,17Z)-eicosapentaenoate + reduced [NADPH--hemoprotein reductase] + O2 = (17S,18R)-epoxy-(5Z,8Z,11Z,14Z)-eicosatetraenoate + oxidized [NADPH--hemoprotein reductase] + H2O + H(+). It carries out the reaction 20-hydroxy-(5Z,8Z,11Z,14Z)-eicosatetraenoate + reduced [NADPH--hemoprotein reductase] + O2 = 20-hydroxy-8,9-epoxy-(5Z,11Z,14Z)-eicosatrienoate + oxidized [NADPH--hemoprotein reductase] + H2O + H(+). The protein operates within lipid metabolism; arachidonate metabolism. A cytochrome P450 monooxygenase involved in polyunsaturated fatty acids (PUFAs) metabolism and signaling. Catalyzes preferentially the epoxidation of double bonds of PUFAs. Converts arachidonic acid (ARA, C20:4(n-6)) primarily to stereospecific products 8R,9S-epoxyeicosatrienoate (EET) and 11R,12S-EET. Plays a major role in the formation of EETs and hydroxy-EETs (HEETs) in kidney. Via EETs may inhibit the epithelial sodium channels (ENaCs) in nephron segments, preventing excessive sodium absorption during high dietary salt intake. Participates in the formation of anti-inflammatory hydroxyepoxyeicosatrienoic acids (HEETs) by converting 20-hydroxyeicosatetraenoic acid (20-HETE) to 20,8,9-HEET, an activator of PPARA. Metabolizes eicosapentaenoic acid (EPA, C20:5(n-3)) to epoxyeicosatetraenoic acid (EETeTr) regioisomers, 8,9-, 11,12-, 14,15-, and 17,18- EETeTr, preferentially producing 17R,18S enantiomer. Mechanistically, uses molecular oxygen inserting one oxygen atom into a substrate, and reducing the second into a water molecule, with two electrons provided by NADPH via cytochrome P450 reductase (CPR; NADPH-ferrihemoprotein reductase). This Mus musculus (Mouse) protein is Cytochrome P450 2C44.